The following is a 338-amino-acid chain: NADPH dehydrogenase (338 aa).

Substrate is bound at residue Tyr28. Positions 60 and 102 each coordinate FMN. 164 to 167 (HAAH) contacts substrate. FMN is bound by residues Arg215 and 307 to 308 (AR).

This sequence belongs to the NADH:flavin oxidoreductase/NADH oxidase family. NamA subfamily. Homotetramer. FMN is required as a cofactor.

The catalysed reaction is A + NADPH + H(+) = AH2 + NADP(+). Catalyzes the reduction of the double bond of an array of alpha,beta-unsaturated aldehydes and ketones. It also reduces the nitro group of nitroester and nitroaromatic compounds. It could have a role in detoxification processes. The protein is NADPH dehydrogenase of Bacillus velezensis (strain DSM 23117 / BGSC 10A6 / LMG 26770 / FZB42) (Bacillus amyloliquefaciens subsp. plantarum).